The following is a 57-amino-acid chain: DELTA-limacoditoxin(2)-Dv11 (57 aa).

The first 24 residues, 1 to 24 (MKFAKTFLLLFVVLLLLSIVMAEP), serve as a signal peptide directing secretion.

It belongs to the limacoditoxin-2 (cecropin-like) family. In terms of tissue distribution, expressed by the venom secretory cell of the spine. The spine is a cuticular structure containing a single large nucleated venom-secreting cell at its base. It is an independent unit capable of producing, storing and injecting venom. On the back of D.vulnerans caterpillars, spines are grouped together by 50 to 100 to form scoli, of which there are eight in D.vulnerans.

It localises to the secreted. Peptide that induces pain in mammals and has insecticidal, antibacterial and antiparasitic activities. Induces partially reversible paralysis in D.melanogaster when tested at high doses. Shows a moderate antiparasitic activity against the major pathogenic nematode of ruminants (H.contortus, EC(50)=30.5 uM). Has potent or moderate antibacterial activities against A.baumannii (MIC&lt;0.25 ug/mL) and S.aureus (MIC=16 ug/mL). Has no activity on the other bacteria tested, nor on the fungus C.albicans. Strongly induces the increase of intracellular calcium in mice DRG neurons, which is a proxy for neuronal activation that would occur during nociception. This increase is due to influx of extracellular calcium, suggesting that the peptide forms pore or channel in neuronal cell membranes. In addition, intraplantar injection in mice provokes nocifensive behavior, suggesting a pain-inducing activity. The sequence is that of DELTA-limacoditoxin(2)-Dv11 from Doratifera vulnerans (Mottled cup moth).